The following is a 428-amino-acid chain: Nucleotidyltransferase MB21D2 (428 aa).

The interval 366–389 (QRRGSTTSIPSPQSDGGDPNQPDD) is disordered. Over residues 368–379 (RGSTTSIPSPQS) the composition is skewed to polar residues. Threonine 372 bears the Phosphothreonine mark. Phosphoserine is present on residues serine 373, serine 376, and serine 379.

It belongs to the mab-21 family.

Functionally, probable nucleotidyltransferase that catalyzes the formation of cyclic dinucleotide second messenger in response to some unknown stimulus. The polypeptide is Nucleotidyltransferase MB21D2 (Mus musculus (Mouse)).